The sequence spans 230 residues: Probable septum site-determining protein MinC (230 aa).

Belongs to the MinC family. Interacts with MinD and FtsZ.

Functionally, cell division inhibitor that blocks the formation of polar Z ring septums. Rapidly oscillates between the poles of the cell to destabilize FtsZ filaments that have formed before they mature into polar Z rings. Prevents FtsZ polymerization. This is Probable septum site-determining protein MinC from Cronobacter sakazakii (strain ATCC BAA-894) (Enterobacter sakazakii).